Reading from the N-terminus, the 532-residue chain is Flavin-containing monooxygenase 3 (532 aa).

FAD is bound by residues 9 to 13 (GAGVS), Glu-32, 40 to 41 (LW), and 61 to 62 (NS). NADP(+) is bound by residues 60-61 (SN) and 195-198 (SGCD). Ser-401 is subject to Phosphoserine. A helical transmembrane segment spans residues 510–530 (FFFHWLKLFAIPILLIAVFLV).

The protein belongs to the FMO family. Requires FAD as cofactor.

Its subcellular location is the microsome membrane. The protein resides in the endoplasmic reticulum membrane. The enzyme catalyses trimethylamine + NADPH + O2 = trimethylamine N-oxide + NADP(+) + H2O. It catalyses the reaction N,N-dimethylaniline + NADPH + O2 + H(+) = N,N-dimethylaniline N-oxide + NADP(+) + H2O. The catalysed reaction is hypotaurine + NADPH + O2 + H(+) = taurine + NADP(+) + H2O. It carries out the reaction (S)-nicotine + NADPH + O2 = trans-(S)-nicotine N(1')-oxide + NADP(+) + H2O. The enzyme catalyses albendazole + NADPH + O2 + H(+) = albendazole S-oxide + NADP(+) + H2O. Functionally, essential hepatic enzyme that catalyzes the oxygenation of a wide variety of nitrogen- and sulfur-containing compounds including drugs as well as dietary compounds. Plays an important role in the metabolism of trimethylamine (TMA), via the production of trimethylamine N-oxide (TMAO) metabolite. TMA is generated by the action of gut microbiota using dietary precursors such as choline, choline containing compounds, betaine or L-carnitine. By regulating TMAO concentration, FMO3 directly impacts both platelet responsiveness and rate of thrombus formation. The chain is Flavin-containing monooxygenase 3 (FMO3) from Pan troglodytes (Chimpanzee).